The following is a 415-amino-acid chain: Lysosome-associated membrane glycoprotein 2 (415 aa).

An N-terminal signal peptide occupies residues 1-25; that stretch reads MCLSPVKGAKLILIFLFLGAVQSNA. Residues 26–188 are first lumenal domain; that stretch reads LIVNLTDSKG…SKNEQVCEED (163 aa). Over 26–379 the chain is Lumenal; sequence LIVNLTDSKG…AQDCSADEDN (354 aa). Asn-29, Asn-45, Asn-54, Asn-57, Asn-97, Asn-115, and Asn-175 each carry an N-linked (GlcNAc...) asparagine glycan. A disulfide bridge links Cys-37 with Cys-75. A disulfide bond links Cys-149 and Cys-185. Residues 189-233 form a hinge region; it reads QTPTTVAPIIHTTAPSTTTTLTPTSTPTPTPTPTPTVGNYSIRNG. Positions 202–213 are enriched in low complexity; the sequence is APSTTTTLTPTS. The tract at residues 202–227 is disordered; the sequence is APSTTTTLTPTSTPTPTPTPTPTVGN. N-linked (GlcNAc...) asparagine glycosylation is found at Asn-227, Asn-234, Asn-247, Asn-265, Asn-280, Asn-312, Asn-317, Asn-322, and Asn-361. A second lumenal domain region spans residues 234–379; the sequence is NTTCLLATMG…AQDCSADEDN (146 aa). The cysteines at positions 237 and 270 are disulfide-linked. The cysteines at positions 336 and 373 are disulfide-linked. Residues 380 to 404 traverse the membrane as a helical segment; the sequence is FLVPIAVGAALGGVLILVLLAYFIG. The Cytoplasmic segment spans residues 405 to 415; it reads LKRHHTGYEQF. The segment at 406-409 is important for binding and subsequent lysosomal degradation of target proteins; it reads KRHH.

The protein belongs to the LAMP family. Monomer. Forms large homooligomers. Interacts (via its cytoplasmic region) with HSPA8; HSPA8 mediates recruitment of proteins with a KFERQ motif to the surface of the lysosome for chaperone-mediated autophagy. Interacts with HSP90 in the lysosome lumen; this enhances LAMP2 stability. Interacts with MLLT11. Interacts with ABCB9. Interacts with FURIN. Interacts with CT55; this interaction may be important for LAMP2 protein stability. Interacts with TMEM175; inhibiting the proton channel activity of TMEM175. Forms a ternary complex with RAB7A and RUFY4 (via RUN domain); the interaction with RAB7A is mediated by RUFY4 (via RUN and coiled coil domains). In terms of processing, extensively N-glycosylated. Contains a minor proportion of O-linked glycans. As to expression, detected in liver and kidney (at protein level). Detected in liver and kidney.

The protein resides in the lysosome membrane. Its subcellular location is the endosome membrane. The protein localises to the cytoplasmic vesicle. It is found in the autophagosome membrane. It localises to the cell membrane. Lysosomal membrane glycoprotein which plays an important role in lysosome biogenesis, lysosomal pH regulation and autophagy. Acts as an important regulator of lysosomal lumen pH regulation by acting as a direct inhibitor of the proton channel TMEM175, facilitating lysosomal acidification for optimal hydrolase activity. Plays an important role in chaperone-mediated autophagy, a process that mediates lysosomal degradation of proteins in response to various stresses and as part of the normal turnover of proteins with a long biological half-live. Functions by binding target proteins, such as GAPDH, NLRP3 and MLLT11, and targeting them for lysosomal degradation. In the chaperone-mediated autophagy, acts downstream of chaperones, such as HSPA8/HSC70, which recognize and bind substrate proteins and mediate their recruitment to lysosomes, where target proteins bind LAMP2. Plays a role in lysosomal protein degradation in response to starvation. Required for the fusion of autophagosomes with lysosomes during autophagy. Cells that lack LAMP2 express normal levels of VAMP8, but fail to accumulate STX17 on autophagosomes, which is the most likely explanation for the lack of fusion between autophagosomes and lysosomes. Required for normal degradation of the contents of autophagosomes. Required for efficient MHC class II-mediated presentation of exogenous antigens via its function in lysosomal protein degradation; antigenic peptides generated by proteases in the endosomal/lysosomal compartment are captured by nascent MHC II subunits. Is not required for efficient MHC class II-mediated presentation of endogenous antigens. This chain is Lysosome-associated membrane glycoprotein 2 (Lamp2), found in Mus musculus (Mouse).